The sequence spans 187 residues: Elongation factor P (187 aa).

This sequence belongs to the elongation factor P family.

It localises to the cytoplasm. Its pathway is protein biosynthesis; polypeptide chain elongation. Functionally, involved in peptide bond synthesis. Stimulates efficient translation and peptide-bond synthesis on native or reconstituted 70S ribosomes in vitro. Probably functions indirectly by altering the affinity of the ribosome for aminoacyl-tRNA, thus increasing their reactivity as acceptors for peptidyl transferase. The sequence is that of Elongation factor P from Roseobacter denitrificans (strain ATCC 33942 / OCh 114) (Erythrobacter sp. (strain OCh 114)).